The following is a 370-amino-acid chain: Cobalt-precorrin-5B C(1)-methyltransferase (370 aa).

Belongs to the CbiD family.

It catalyses the reaction Co-precorrin-5B + S-adenosyl-L-methionine = Co-precorrin-6A + S-adenosyl-L-homocysteine. Its pathway is cofactor biosynthesis; adenosylcobalamin biosynthesis; cob(II)yrinate a,c-diamide from sirohydrochlorin (anaerobic route): step 6/10. Its function is as follows. Catalyzes the methylation of C-1 in cobalt-precorrin-5B to form cobalt-precorrin-6A. The sequence is that of Cobalt-precorrin-5B C(1)-methyltransferase from Pseudomonas savastanoi pv. phaseolicola (strain 1448A / Race 6) (Pseudomonas syringae pv. phaseolicola (strain 1448A / Race 6)).